Here is an 83-residue protein sequence, read N- to C-terminus: Mu-theraphotoxin-Hhn2m (83 aa).

The first 21 residues, 1–21, serve as a signal peptide directing secretion; that stretch reads MKASMFLALAGLVLLFVVGYA. Positions 22–48 are excised as a propeptide; sequence SESEEKEFPIELLSKIFAVDVFKGEER. 3 disulfide bridges follow: C50–C65, C57–C70, and C64–C77. A Leucine amide modification is found at L81.

This sequence belongs to the neurotoxin 10 (Hwtx-1) family. 15 (Hntx-3) subfamily. Monomer. In terms of tissue distribution, expressed by the venom gland.

It is found in the secreted. Functionally, lethal neurotoxin. Selectively blocks tetrodotoxin-sensitive voltage-gated sodium channels (Nav). Does not affect tetrodotoxin-resistant voltage-gated sodium channels or calcium channels. This is Mu-theraphotoxin-Hhn2m from Cyriopagopus hainanus (Chinese bird spider).